Here is a 407-residue protein sequence, read N- to C-terminus: UPF0597 protein NAMH_0191 (407 aa).

This sequence belongs to the UPF0597 family.

The protein is UPF0597 protein NAMH_0191 of Nautilia profundicola (strain ATCC BAA-1463 / DSM 18972 / AmH).